We begin with the raw amino-acid sequence, 369 residues long: UPF0283 membrane protein RPA1583 (369 aa).

Residues Met1 to Arg61 form a disordered region. Over residues Ala34–Ala51 the composition is skewed to low complexity. The next 3 helical transmembrane spans lie at Trp90–Ile110, Leu124–Gly144, and Val239–Ala259.

This sequence belongs to the UPF0283 family.

Its subcellular location is the cell inner membrane. The polypeptide is UPF0283 membrane protein RPA1583 (Rhodopseudomonas palustris (strain ATCC BAA-98 / CGA009)).